An 872-amino-acid polypeptide reads, in one-letter code: Alanine--tRNA ligase (872 aa).

Zn(2+) is bound by residues H567, H571, C669, and H673.

The protein belongs to the class-II aminoacyl-tRNA synthetase family. Requires Zn(2+) as cofactor.

Its subcellular location is the cytoplasm. The enzyme catalyses tRNA(Ala) + L-alanine + ATP = L-alanyl-tRNA(Ala) + AMP + diphosphate. In terms of biological role, catalyzes the attachment of alanine to tRNA(Ala) in a two-step reaction: alanine is first activated by ATP to form Ala-AMP and then transferred to the acceptor end of tRNA(Ala). Also edits incorrectly charged Ser-tRNA(Ala) and Gly-tRNA(Ala) via its editing domain. The sequence is that of Alanine--tRNA ligase from Streptococcus pneumoniae (strain Hungary19A-6).